We begin with the raw amino-acid sequence, 149 residues long: Peptide deformylase (149 aa).

2 residues coordinate Fe cation: cysteine 92 and histidine 134. The active site involves glutamate 135. Histidine 138 lines the Fe cation pocket.

It belongs to the polypeptide deformylase family. Requires Fe(2+) as cofactor.

The catalysed reaction is N-terminal N-formyl-L-methionyl-[peptide] + H2O = N-terminal L-methionyl-[peptide] + formate. Functionally, removes the formyl group from the N-terminal Met of newly synthesized proteins. Requires at least a dipeptide for an efficient rate of reaction. N-terminal L-methionine is a prerequisite for activity but the enzyme has broad specificity at other positions. The polypeptide is Peptide deformylase (Buchnera aphidicola subsp. Cinara cedri (strain Cc)).